The following is a 263-amino-acid chain: Trem-like transcript 4 protein (263 aa).

Residues 1 to 28 form the signal peptide; the sequence is MAWRYSQLLLVPVQLVFLASVCCPGVWG. An Ig-like V-type domain is found at 29-132; that stretch reads STVSEELHRM…LREVTVLRNI (104 aa). The Extracellular segment spans residues 29 to 200; it reads STVSEELHRM…GWTSPGLLVS (172 aa). Cysteine 47 and cysteine 116 form a disulfide bridge. N-linked (GlcNAc...) asparagine glycosylation occurs at asparagine 100. Positions 168–191 are disordered; sequence SPEETTDSSINGTGHRNQSSSSPG. Residues 201–221 form a helical membrane-spanning segment; that stretch reads VQYGLLLLKALMLSVFCVLLC. At 222-263 the chain is on the cytoplasmic side; sequence WRSGQGREYMAETMELSKLPHISKSLDTVSHISGYEKKANWY.

As to quaternary structure, interacts with TYROBP/DAP12. Predominantly expressed in spleen, with highest levels on selected populations of macrophages, including red pulp macrophages, and on subsets of dendritic cells (DC), mostly on CD8alpha(+) DC (at protein level). Also expressed on blood and spleen Ly6C(low) monocytes (at protein level). Not expressed on lymphocytes or granulocytes (at protein level).

It localises to the cell membrane. Its function is as follows. Positively regulates Toll-like receptor signaling via TLR7, TLR9 and TLR13 in neutrophils and splenic macrophages. Regulates TLR7 signaling by controlling ligand-induced recruitment of TLR7 from the endoplasmic reticulum to endosomes and lysosomes. Positively regulates Toll-like receptor TLR9-induced production of inflammatory cytokines but is dispensable for IFNB1 production. Involved in the anti-viral response to several viruses including influenza virus, vesicular stomatitis virus and cytomegalovirus. Binds to late apoptotic, and necrotic cells, but not living or early apoptotic cells, but is not essential for uptake of dying cells by dendritic cells (DCs). Does not bind nucleic acids. May participate in antigen presentation. The chain is Trem-like transcript 4 protein (Treml4) from Mus musculus (Mouse).